Here is a 635-residue protein sequence, read N- to C-terminus: Voltage-gated potassium channel KCNC4 (635 aa).

The segment at 1–24 (MISSVCVSSYRGRKSGNKPPSKTC) is disordered. Positions 1-28 (MISSVCVSSYRGRKSGNKPPSKTCLKEE) are inactivation gate. Residues 1-226 (MISSVCVSSY…EDPYSSRAAR (226 aa)) lie on the Cytoplasmic side of the membrane. A phosphoserine mark is found at serine 8, serine 9, serine 15, and serine 21. Zn(2+) contacts are provided by histidine 116, cysteine 122, cysteine 143, and cysteine 144. Residues 160–180 (IFESPDGGGSGAGPSDEAGDD) are disordered. Residues 227–247 (VVAFASLFFILVSITTFCLET) form a helical membrane-spanning segment. Residues asparagine 256 and asparagine 265 are each glycosylated (N-linked (GlcNAc...) asparagine). Residues 278 to 298 (EPILTYIEGVCVLWFTLEFLV) traverse the membrane as a helical segment. The Cytoplasmic segment spans residues 299-312 (RIVCCPDTLDFVKN). Residues 313–333 (LLNIIDFVAILPFYLEVGLSG) traverse the membrane as a helical segment. The chain crosses the membrane as a helical; Voltage-sensor span at residues 345–364 (FLRVVRFVRILRIFKLTRHF). The Cytoplasmic portion of the chain corresponds to 365–380 (VGLRVLGHTLRASTNE). Residues 381-401 (FLLLIIFLALGVLIFATMIYY) form a helical membrane-spanning segment. Residues threonine 436, leucine 437, glycine 438, and tyrosine 439 each contribute to the K(+) site. Positions 436 to 441 (TLGYGD) match the Selectivity filter motif. A helical transmembrane segment spans residues 452–472 (VGALCALAGVLTIAMPVPVIV). Topologically, residues 473 to 635 (NNFGMYYSLA…PTAGTLFLPH (163 aa)) are cytoplasmic. Positions 490 to 580 (KKRKKHVPRP…RRALRRSTTR (91 aa)) are disordered. A compositionally biased stretch (basic and acidic residues) spans 527–542 (AREEGMIERKRADSKQ).

Belongs to the potassium channel family. C (Shaw) (TC 1.A.1.2) subfamily. Kv3.4/KCNC4 sub-subfamily. As to quaternary structure, homotetramer. Heterotetramer of potassium channel proteins. Phosphorylation of serine residues in the inactivation gate inhibits rapid channel closure.

The protein resides in the membrane. It carries out the reaction K(+)(in) = K(+)(out). Voltage-gated potassium channel that opens in response to the voltage difference across the membrane, forming a potassium-selective channel through which potassium ions pass in accordance with their electrochemical gradient. The channel displays rapid activation and inactivation kinetics. This chain is Voltage-gated potassium channel KCNC4, found in Homo sapiens (Human).